A 222-amino-acid polypeptide reads, in one-letter code: N-acetyltransferase 8F1 (222 aa).

The chain crosses the membrane as a helical span at residues 53-73; it reads LVLVSGSWILAVICIFFLLLL. An N-acetyltransferase domain is found at 69 to 220; sequence FLLLLLRLLA…CTIQLKYSFP (152 aa).

Belongs to the camello family.

It localises to the membrane. Functionally, may play a role in regulation of gastrulation. This is N-acetyltransferase 8F1 from Mus musculus (Mouse).